The sequence spans 189 residues: Hypoxanthine/guanine phosphoribosyltransferase (189 aa).

Belongs to the purine/pyrimidine phosphoribosyltransferase family. Archaeal HPRT subfamily. As to quaternary structure, homodimer.

It localises to the cytoplasm. It carries out the reaction IMP + diphosphate = hypoxanthine + 5-phospho-alpha-D-ribose 1-diphosphate. The catalysed reaction is GMP + diphosphate = guanine + 5-phospho-alpha-D-ribose 1-diphosphate. It functions in the pathway purine metabolism; IMP biosynthesis via salvage pathway; IMP from hypoxanthine: step 1/1. Catalyzes a salvage reaction resulting in the formation of IMP that is energically less costly than de novo synthesis. The polypeptide is Hypoxanthine/guanine phosphoribosyltransferase (Methanothermus fervidus (strain ATCC 43054 / DSM 2088 / JCM 10308 / V24 S)).